Here is a 777-residue protein sequence, read N- to C-terminus: Mediator of RNA polymerase II transcription subunit 15 (777 aa).

Disordered stretches follow at residues 120 to 139 (MNLPGQPQPGASGMAPHGIT) and 418 to 520 (SIPV…EEQQ). Low complexity predominate over residues 420-434 (PVMSSPSPVQQVQTP). Over residues 435–448 (QPMPPPPQPSPQPS) the composition is skewed to pro residues. Positions 449 to 471 (QPMSQPNSNVSSGPAPSPSSFMP) are enriched in low complexity. Residues 500–519 (TPGNPNSVMSPASNNQSEEQ) are compositionally biased toward polar residues.

The protein belongs to the Mediator complex subunit 15 family. In terms of assembly, component of the Mediator complex. Interacts with srebf1 and srebf2. Interacts with smad2, smad3 and smad4.

It is found in the cytoplasm. The protein localises to the nucleus. Component of the Mediator complex, a coactivator involved in the regulated transcription of nearly all RNA polymerase II-dependent genes. Mediator functions as a bridge to convey information from gene-specific regulatory proteins to the basal RNA polymerase II transcription machinery. Mediator is recruited to promoters by direct interactions with regulatory proteins and serves as a scaffold for the assembly of a functional preinitiation complex with RNA polymerase II and the general transcription factors. Required for cholesterol-dependent gene regulation. Positively regulates the Nodal signaling pathway. The protein is Mediator of RNA polymerase II transcription subunit 15 (med15) of Xenopus laevis (African clawed frog).